The chain runs to 62 residues: Conotoxin Lt5.8 (62 aa).

The N-terminal stretch at 1 to 19 (MLCLPVFIILLLLVSPAAT) is a signal peptide. The propeptide occupies 20 to 47 (MPVDLEILKAPTKESRKDFEMRIELLRS). A Pyrrolidone carboxylic acid modification is found at Gln-50. Glutamine amide is present on Gln-61.

This sequence belongs to the conotoxin T superfamily. Contains 2 disulfide bonds that can be either 'C1-C3, C2-C4' or 'C1-C4, C2-C3', since these disulfide connectivities have been observed for conotoxins with cysteine framework V (for examples, see AC P0DQQ7 and AC P81755). Expressed by the venom duct.

The protein localises to the secreted. This is Conotoxin Lt5.8 from Conus litteratus (Lettered cone).